The following is a 295-amino-acid chain: Small ribosomal subunit protein uS2 (295 aa).

Belongs to the universal ribosomal protein uS2 family.

The polypeptide is Small ribosomal subunit protein uS2 (Rickettsia canadensis (strain McKiel)).